The following is a 214-amino-acid chain: Pyridoxine/pyridoxamine 5'-phosphate oxidase (214 aa).

Residues 8–11 (RINY) and Lys-66 contribute to the substrate site. FMN contacts are provided by residues 61-66 (RIVLIK), 76-77 (FT), Arg-82, Lys-83, and Gln-105. Substrate contacts are provided by Tyr-123, Arg-127, and Ser-131. FMN contacts are provided by residues 140–141 (QS) and Trp-184. 190-192 (RLH) provides a ligand contact to substrate. Arg-194 is an FMN binding site.

The protein belongs to the pyridoxamine 5'-phosphate oxidase family. Homodimer. It depends on FMN as a cofactor.

The enzyme catalyses pyridoxamine 5'-phosphate + O2 + H2O = pyridoxal 5'-phosphate + H2O2 + NH4(+). The catalysed reaction is pyridoxine 5'-phosphate + O2 = pyridoxal 5'-phosphate + H2O2. It functions in the pathway cofactor metabolism; pyridoxal 5'-phosphate salvage; pyridoxal 5'-phosphate from pyridoxamine 5'-phosphate: step 1/1. It participates in cofactor metabolism; pyridoxal 5'-phosphate salvage; pyridoxal 5'-phosphate from pyridoxine 5'-phosphate: step 1/1. In terms of biological role, catalyzes the oxidation of either pyridoxine 5'-phosphate (PNP) or pyridoxamine 5'-phosphate (PMP) into pyridoxal 5'-phosphate (PLP). The polypeptide is Pyridoxine/pyridoxamine 5'-phosphate oxidase (Burkholderia orbicola (strain MC0-3)).